The primary structure comprises 219 residues: Large ribosomal subunit protein uL3 (219 aa).

The span at 133-145 (GRASHGNSRSHNV) shows a compositional bias: polar residues. Residues 133–153 (GRASHGNSRSHNVPGSIGMAQ) form a disordered region. At Gln-153 the chain carries N5-methylglutamine.

It belongs to the universal ribosomal protein uL3 family. In terms of assembly, part of the 50S ribosomal subunit. Forms a cluster with proteins L14 and L19. Post-translationally, methylated by PrmB.

Functionally, one of the primary rRNA binding proteins, it binds directly near the 3'-end of the 23S rRNA, where it nucleates assembly of the 50S subunit. This Paraburkholderia phymatum (strain DSM 17167 / CIP 108236 / LMG 21445 / STM815) (Burkholderia phymatum) protein is Large ribosomal subunit protein uL3.